The following is a 425-amino-acid chain: Arogenate dehydratase 5, chloroplastic (425 aa).

The N-terminal 38 residues, 1 to 38, are a transit peptide targeting the chloroplast; the sequence is MQTISPAFSCDLKSVIQPNLTAKKARYSHVNGKRVSVR. In terms of domain architecture, Prephenate dehydratase spans 127–304; it reads RVAYQGVPGA…NVTRFLMLAR (178 aa). The ACT domain maps to 320–411; that stretch reads VFAAQEHKGT…SFLRVLGSYP (92 aa).

Expressed in roots, leaves, stems, flowers and siliques. More abundant in stems and roots.

The protein localises to the plastid. The protein resides in the chloroplast stroma. It catalyses the reaction L-arogenate + H(+) = L-phenylalanine + CO2 + H2O. Its pathway is amino-acid biosynthesis; L-phenylalanine biosynthesis; L-phenylalanine from L-arogenate: step 1/1. Its function is as follows. Converts the prephenate produced from the shikimate-chorismate pathway into phenylalanine. The chain is Arogenate dehydratase 5, chloroplastic from Arabidopsis thaliana (Mouse-ear cress).